The primary structure comprises 309 residues: RING finger protein mug145 (309 aa).

A helical membrane pass occupies residues 23 to 43 (ILLFALVIILSVIFINFFFFY). The RING-type; atypical zinc-finger motif lies at 205 to 247 (CIICYADYAFDDILRVLPCEHVFHTQCIDTWMTTMKASCPLCN).

The protein resides in the membrane. Its function is as follows. Has a role in meiosis. The sequence is that of RING finger protein mug145 (mug145) from Schizosaccharomyces pombe (strain 972 / ATCC 24843) (Fission yeast).